We begin with the raw amino-acid sequence, 219 residues long: Oxaloacetate tautomerase YcgM (219 aa).

E70, E72, and D101 together coordinate Mg(2+).

It belongs to the FAH family. A divalent metal cation is required as a cofactor.

The catalysed reaction is oxaloacetate = enol-oxaloacetate. In terms of biological role, tautomerase that converts enol-oxaloacetate to the keto form of oxaloacetate. This is Oxaloacetate tautomerase YcgM from Escherichia coli (strain K12).